Reading from the N-terminus, the 444-residue chain is Transcription activator AKTR-1 (444 aa).

A DNA-binding region (zn(2)-C6 fungal-type) is located at residues 16–43; it reads CDFCTQSKLRCNKNKPSCRRCTIQQQPC. Residues 49-87 are disordered; that stretch reads RRTGRPPKHPRKANDCQEANGQHGEQDPVTSTPGGSCQQ. The span at 50-59 shows a compositional bias: basic residues; the sequence is RTGRPPKHPR. A compositionally biased stretch (polar residues) spans 76–87; it reads PVTSTPGGSCQQ.

Its subcellular location is the nucleus. Transcription factor that regulates the expression of the gene clusters that mediate the biosynthesis of the host-selective toxins (HSTs) AK-toxins responsible for Japanese pear black spot disease by the Japanese pear pathotype. AK-toxins are esters of 9,10-epoxy 8-hydroxy 9-methyldecatrienoic acid (EDA). On cellular level, AK-toxins affect plasma membrane of susceptible cells and cause a sudden increase in loss of K(+) after a few minutes of toxin treatment. This Alternaria alternata (Alternaria rot fungus) protein is Transcription activator AKTR-1.